A 277-amino-acid chain; its full sequence is Methylamine utilization protein MauF (277 aa).

7 helical membrane-spanning segments follow: residues 33–53, 59–79, 111–131, 132–152, 179–199, 205–225, and 257–277; these read IAVL…LASA, LWAV…WSPC, YGLG…IAGF, SGFG…YGAH, WVIG…YVQT, MTLA…VALF, and ALAD…LALI.

The protein localises to the cell membrane. It functions in the pathway one-carbon metabolism; methylamine degradation. The sequence is that of Methylamine utilization protein MauF (mauF) from Paracoccus denitrificans.